The following is a 142-amino-acid chain: Ribosome-binding factor A (142 aa).

Residues 119 to 142 (ETLGEVQSESDQPTTDETTTVNKT) form a disordered region. The segment covering 123 to 142 (EVQSESDQPTTDETTTVNKT) has biased composition (polar residues).

It belongs to the RbfA family. Monomer. Binds 30S ribosomal subunits, but not 50S ribosomal subunits or 70S ribosomes.

It is found in the cytoplasm. Functionally, one of several proteins that assist in the late maturation steps of the functional core of the 30S ribosomal subunit. Associates with free 30S ribosomal subunits (but not with 30S subunits that are part of 70S ribosomes or polysomes). Required for efficient processing of 16S rRNA. May interact with the 5'-terminal helix region of 16S rRNA. In Prochlorococcus marinus (strain MIT 9303), this protein is Ribosome-binding factor A.